We begin with the raw amino-acid sequence, 179 residues long: Segregation and condensation protein B (179 aa).

It belongs to the ScpB family. As to quaternary structure, homodimer. Homodimerization may be required to stabilize the binding of ScpA to the Smc head domains. Component of a cohesin-like complex composed of ScpA, ScpB and the Smc homodimer, in which ScpA and ScpB bind to the head domain of Smc. The presence of the three proteins is required for the association of the complex with DNA.

It localises to the cytoplasm. In terms of biological role, participates in chromosomal partition during cell division. May act via the formation of a condensin-like complex containing Smc and ScpA that pull DNA away from mid-cell into both cell halves. This chain is Segregation and condensation protein B, found in Streptococcus equi subsp. equi (strain 4047).